Consider the following 725-residue polypeptide: 1,4-alpha-glucan branching enzyme GlgB (725 aa).

Aspartate 406 acts as the Nucleophile in catalysis. The active-site Proton donor is glutamate 459.

The protein belongs to the glycosyl hydrolase 13 family. GlgB subfamily. In terms of assembly, monomer.

It carries out the reaction Transfers a segment of a (1-&gt;4)-alpha-D-glucan chain to a primary hydroxy group in a similar glucan chain.. Its pathway is glycan biosynthesis; glycogen biosynthesis. In terms of biological role, catalyzes the formation of the alpha-1,6-glucosidic linkages in glycogen by scission of a 1,4-alpha-linked oligosaccharide from growing alpha-1,4-glucan chains and the subsequent attachment of the oligosaccharide to the alpha-1,6 position. The chain is 1,4-alpha-glucan branching enzyme GlgB from Methylobacillus flagellatus (strain ATCC 51484 / DSM 6875 / VKM B-1610 / KT).